The sequence spans 175 residues: MTSSAMDNNEPKVLEMVYDATILPEGSSMDPNIMDCINRHINMCIQRTYSSSIIAILDRFLMMNKDELNNTQCHIIKEFMTYEQMAIDHYGGYVNAILYQIRKRPNQHHTIDLFKRIKRTRYDTFKVDPVEFVKKVIGFVSILNKYKPVYSYVLYENVLYDEFKCFINYVETKYF.

It belongs to the poxviridae OPG036 family.

The protein localises to the host nucleus. Plays a role in the inhibition of host innate immune response. Within the host nucleus, inhibits activation of interferon-beta promoter by inhibiting IRF3 activation. This Bos taurus (Bovine) protein is Protein OPG036 (OPG036).